The chain runs to 734 residues: Photosystem I P700 chlorophyll a apoprotein A2 (734 aa).

8 consecutive transmembrane segments (helical) span residues 46–69, 135–158, 175–199, 273–291, 330–353, 369–395, 417–439, and 517–535; these read IFAS…FHVA, LYTG…LHLQ, LNHH…HVAI, IAHH…GHMY, IHFQ…QHMY, AALY…IFFI, AIIS…LYVH, and FLVH…LILV. 2 residues coordinate [4Fe-4S] cluster: cysteine 559 and cysteine 568. Transmembrane regions (helical) follow at residues 575 to 596 and 643 to 665; these read AFYL…YWHW and LSVW…MFLI. The chlorophyll a site is built by histidine 654, methionine 662, and tyrosine 670. Tryptophan 671 lines the phylloquinone pocket. The chain crosses the membrane as a helical span at residues 707–727; it reads LVGLAHFSVGYIFTYAAFLIA.

This sequence belongs to the PsaA/PsaB family. The PsaA/B heterodimer binds the P700 chlorophyll special pair and subsequent electron acceptors. PSI consists of a core antenna complex that captures photons, and an electron transfer chain that converts photonic excitation into a charge separation. The eukaryotic PSI reaction center is composed of at least 11 subunits. It depends on P700 is a chlorophyll a/chlorophyll a' dimer, A0 is one or more chlorophyll a, A1 is one or both phylloquinones and FX is a shared 4Fe-4S iron-sulfur center. as a cofactor.

Its subcellular location is the plastid. It is found in the chloroplast thylakoid membrane. It catalyses the reaction reduced [plastocyanin] + hnu + oxidized [2Fe-2S]-[ferredoxin] = oxidized [plastocyanin] + reduced [2Fe-2S]-[ferredoxin]. In terms of biological role, psaA and PsaB bind P700, the primary electron donor of photosystem I (PSI), as well as the electron acceptors A0, A1 and FX. PSI is a plastocyanin-ferredoxin oxidoreductase, converting photonic excitation into a charge separation, which transfers an electron from the donor P700 chlorophyll pair to the spectroscopically characterized acceptors A0, A1, FX, FA and FB in turn. Oxidized P700 is reduced on the lumenal side of the thylakoid membrane by plastocyanin. In Nymphaea alba (White water-lily), this protein is Photosystem I P700 chlorophyll a apoprotein A2.